Here is a 286-residue protein sequence, read N- to C-terminus: Phosphatidylserine decarboxylase proenzyme (286 aa).

Active-site charge relay system; for autoendoproteolytic cleavage activity residues include D88, H145, and S251. S251 functions as the Schiff-base intermediate with substrate; via pyruvic acid; for decarboxylase activity in the catalytic mechanism. S251 carries the pyruvic acid (Ser); by autocatalysis modification.

This sequence belongs to the phosphatidylserine decarboxylase family. PSD-B subfamily. Prokaryotic type I sub-subfamily. As to quaternary structure, heterodimer of a large membrane-associated beta subunit and a small pyruvoyl-containing alpha subunit. Requires pyruvate as cofactor. Is synthesized initially as an inactive proenzyme. Formation of the active enzyme involves a self-maturation process in which the active site pyruvoyl group is generated from an internal serine residue via an autocatalytic post-translational modification. Two non-identical subunits are generated from the proenzyme in this reaction, and the pyruvate is formed at the N-terminus of the alpha chain, which is derived from the carboxyl end of the proenzyme. The autoendoproteolytic cleavage occurs by a canonical serine protease mechanism, in which the side chain hydroxyl group of the serine supplies its oxygen atom to form the C-terminus of the beta chain, while the remainder of the serine residue undergoes an oxidative deamination to produce ammonia and the pyruvoyl prosthetic group on the alpha chain. During this reaction, the Ser that is part of the protease active site of the proenzyme becomes the pyruvoyl prosthetic group, which constitutes an essential element of the active site of the mature decarboxylase.

The protein resides in the cell membrane. It carries out the reaction a 1,2-diacyl-sn-glycero-3-phospho-L-serine + H(+) = a 1,2-diacyl-sn-glycero-3-phosphoethanolamine + CO2. It functions in the pathway phospholipid metabolism; phosphatidylethanolamine biosynthesis; phosphatidylethanolamine from CDP-diacylglycerol: step 2/2. Its function is as follows. Catalyzes the formation of phosphatidylethanolamine (PtdEtn) from phosphatidylserine (PtdSer). The protein is Phosphatidylserine decarboxylase proenzyme of Verminephrobacter eiseniae (strain EF01-2).